The following is a 2021-amino-acid chain: MSSLAQQLQSIASLDAARLTSAYGAPSGKSYLFPPDVASSHDIDSIFDLAQSGFDELLSLDPEMEEFEEELFSESAKRTDRMVLSKEENDNLDRTLGRCLRRLGKWIRLMAGGKCIEWMVRRFRVHEMNVDEVLRSFLPYHESPNFPRILAIVTIPKTSPYYATFAPLVKDAQPIPRSYIVTSISPAKDKSLVLLGDIASMVQQAVKEGVVHHALLTFWTATMVDLLEGARHGKGANEGVVKQLVESFVTLLETPKAGEDVNAAVYPPLVLLTRTVPLADEPFLAIVSSLLTPGTGSNPSQRMLTLLVILNDRHTWSLGLGEHATENLAKVSQLGEILVAAMDKYRFEKALNIVVKSMLEKPDLHAKALATVLEHESLPTSVTELASTNLLQLGSSTDSQEVKAACKSLLTNLRERHPSIVDTAFLQASASLEIDTHPVDHGLVQKPSGEVAFLDVYAADISSRVTGVKSVIDMAKKGEEIESSITALEARLSDVDENVVNALYEEPKSLLEILPVEKYIAGVKPVFWAVSPISHIIGLHLDFISQHLLVSHPEAGKQIYESLLFPIFLSTEKRQPLTKSQALKLLNGGFKKLDKLSTIGPEIGKAREEGMKGAQKGNLVIAKALAGATLSSSTFEDDISFLIAQLDSTTSSARLLAYLILHSLVLTLRGPRQLSTSLSILKYLSPRLTGHSLRDLKHADENVNTEYMESVYKKPEETRTTLRAIVSILAAMGKVIKPIGQIVWLSGESKAKDASYKTFAQQIYLWANIAILPANVAHFLLRSLLTQLGEEALLFFSSIWTSSTSPVPLRISALKHALAFIHAYATLPTSPAAQGQPVDFQVVLPQILIALQDSDKDVRRVAVDVLRSVEGGEGMGDVYALDTIYGDRSEMTQLLKSVDRKKYIETLLEVAEEFVIDRLRLKAFHTEVLNMQSGKNRKESAHRRAIIGFLMSHVASYRAIDPRLVLLSLLSDVHDTSILRSAIPLLASLFDDKSEESLWLSSLPDGQQALYVQALMGSLRVQSVSVLGEAGGEGWEFLLNLLDASKSSRFIARLRILSFKAMVGGVFSALEAHQQIEYIIALIQCIHALPTDDALDAVKVLEKLDIQPRVLIELIEHLSDPLETSVNRKRQRQDAADEDRPTQAVHELITFVDSRNWPSIPASAPLVASLMSILSALLAKRLIVKEGIDYLEQEVFGAILALVERITDAQEIQRAHVGIEVVIKVIRASTNPRTAQRALLVASELARLIPDAVLHNVMPIFTFMGASDFQRDDAYTFGVVEKTVSRIVPVMTQSLKEKAQNSLELYTKSLTFLSIFTDMAGRLPRHRTLPFFVHLVKSLGASDYLAPVCMLLVDRATTKAGRNKESVSTALELPANLVAAFDVSVKTQVLGEIVQELARLIGDLSKADKEAFLSQTISENDATDRPLRQVTYLLSFLSSILGQLRGKACSQALVQSAVRQLIVLAASTSQPVMATTDIPSNLHKTLASTMLLLSADNFLGVTAELLSDGSEQDIIMSLGVFAERLPLIKSEVRLRCTKVIAEILKRIGGLLAASGATVNAALEAVKSVIKTAIAQEDGALASVLPTVVGCIGKVKDSAVIVAALSLVELLVRRLAARTIPFIQSILDTSLNLIKSTKLAATATNQAFVTLSSVIETIPTFISSKQLNAILITTIDYRRVEETNSASLFTTLAKKIRTKSLFPVLIEAWKTVQEKGGDNEMKGFFEMLRLTLKNAAREDLPSMLKPVFAFFLDVFDLRHRLQLKGVDTRVVNDVEESAIGSFLELVTKLNEPTFKPLFIRLYDWAVIDLAEGKNADDGRLTERKIVLLHVMMGLLTKFKNLLSPYMGILFPHIQELLPAFASGSVRSEPLWTLLLNVLGKSFEVDSGAFWTDALEIELLPQLVAQVPLFLPIAPSPQSPRPISSCLANLAGSTTAENVLRRLNTAVCLATRSDDPKVRLAALDALSAIWDAQAEEMVGLVPETVSEFLAELLEDESKDVEIAARGVLAKIEKVTGSLKEYLE.

HEAT repeat units follow at residues 837–875 (PVDF…GEGM), 976–1014 (TSIL…YVQA), 1281–1319 (EKTV…FTDM), 1935–1973 (ENVL…AQAE), and 1977–2015 (GLVP…VTGS).

This sequence belongs to the HEATR1/UTP10 family. As to quaternary structure, component of the ribosomal small subunit (SSU) processome.

It localises to the nucleus. Its subcellular location is the nucleolus. Its function is as follows. Involved in nucleolar processing of pre-18S ribosomal RNA. Involved in ribosome biosynthesis. The sequence is that of U3 small nucleolar RNA-associated protein 10 (UTP10) from Cryptococcus neoformans var. neoformans serotype D (strain B-3501A) (Filobasidiella neoformans).